Here is a 338-residue protein sequence, read N- to C-terminus: Holliday junction branch migration complex subunit RuvB (338 aa).

The segment at 1–180 is large ATPase domain (RuvB-L); the sequence is MERLLDNKFS…FGIIERLDYY (180 aa). ATP-binding residues include L19, R20, G61, K64, T65, T66, R170, Y180, and R217. T65 is a Mg(2+) binding site. Residues 181–251 are small ATPAse domain (RuvB-S); it reads TVEELSQIVM…VAKSGLEMFE (71 aa). The segment at 254–338 is head domain (RuvB-H); that stretch reads EYGLDLVDRN…FKLKESGDNR (85 aa). Residues K309 and R314 each contribute to the DNA site.

The protein belongs to the RuvB family. Homohexamer. Forms an RuvA(8)-RuvB(12)-Holliday junction (HJ) complex. HJ DNA is sandwiched between 2 RuvA tetramers; dsDNA enters through RuvA and exits via RuvB. An RuvB hexamer assembles on each DNA strand where it exits the tetramer. Each RuvB hexamer is contacted by two RuvA subunits (via domain III) on 2 adjacent RuvB subunits; this complex drives branch migration. In the full resolvosome a probable DNA-RuvA(4)-RuvB(12)-RuvC(2) complex forms which resolves the HJ.

It is found in the cytoplasm. The catalysed reaction is ATP + H2O = ADP + phosphate + H(+). The RuvA-RuvB-RuvC complex processes Holliday junction (HJ) DNA during genetic recombination and DNA repair, while the RuvA-RuvB complex plays an important role in the rescue of blocked DNA replication forks via replication fork reversal (RFR). RuvA specifically binds to HJ cruciform DNA, conferring on it an open structure. The RuvB hexamer acts as an ATP-dependent pump, pulling dsDNA into and through the RuvAB complex. RuvB forms 2 homohexamers on either side of HJ DNA bound by 1 or 2 RuvA tetramers; 4 subunits per hexamer contact DNA at a time. Coordinated motions by a converter formed by DNA-disengaged RuvB subunits stimulates ATP hydrolysis and nucleotide exchange. Immobilization of the converter enables RuvB to convert the ATP-contained energy into a lever motion, pulling 2 nucleotides of DNA out of the RuvA tetramer per ATP hydrolyzed, thus driving DNA branch migration. The RuvB motors rotate together with the DNA substrate, which together with the progressing nucleotide cycle form the mechanistic basis for DNA recombination by continuous HJ branch migration. Branch migration allows RuvC to scan DNA until it finds its consensus sequence, where it cleaves and resolves cruciform DNA. This Caldicellulosiruptor bescii (strain ATCC BAA-1888 / DSM 6725 / KCTC 15123 / Z-1320) (Anaerocellum thermophilum) protein is Holliday junction branch migration complex subunit RuvB.